A 393-amino-acid chain; its full sequence is MDYKEQSHIIPTYKRFDIVLEKGQGVYLFDDKAKKYLDFSSGIGVCALGYNHAKFNAKIKAQVDKLLHTSNLYYNENIAAAAKNLAKASALERVFFTNSGTESIEGAMKTARKYAFNKGVKGGQFIAFKHSFHGRTLGALSLTANEKYQKPFKPLISGVKFAKYNDISSVEKLVNEKTCAIILESVQGEGGINPANKDFYKALRKLCDEKDILLIADEIQCGMGRSGKFFAYEHAQILPDIMTSAKALGCGLSVGAFVINQKVASNSLEAGDHGSTYGGNPLVCAGVNAVFEIFKEEKILENVNKLTPYLEQSLDELINEFDFCKKRKGLGFMQGLSLDKSVKVAKVIQKCQENALLLISCGENDLRFLPPLILQKEHIDEMSEKLRKALKSF.

Pyridoxal 5'-phosphate contacts are provided by residues G100–T101 and F132. Residue R135 coordinates N(2)-acetyl-L-ornithine. D217–Q220 contacts pyridoxal 5'-phosphate. An N6-(pyridoxal phosphate)lysine modification is found at K246. S275 is a binding site for N(2)-acetyl-L-ornithine. T276 lines the pyridoxal 5'-phosphate pocket.

The protein belongs to the class-III pyridoxal-phosphate-dependent aminotransferase family. ArgD subfamily. Homodimer. The cofactor is pyridoxal 5'-phosphate.

The protein localises to the cytoplasm. The catalysed reaction is N(2)-acetyl-L-ornithine + 2-oxoglutarate = N-acetyl-L-glutamate 5-semialdehyde + L-glutamate. Its pathway is amino-acid biosynthesis; L-arginine biosynthesis; N(2)-acetyl-L-ornithine from L-glutamate: step 4/4. The chain is Acetylornithine aminotransferase from Campylobacter jejuni subsp. jejuni serotype O:2 (strain ATCC 700819 / NCTC 11168).